The sequence spans 77 residues: Translational regulator CsrA (77 aa).

It belongs to the CsrA/RsmA family. In terms of assembly, homodimer; the beta-strands of each monomer intercalate to form a hydrophobic core, while the alpha-helices form wings that extend away from the core.

The protein resides in the cytoplasm. Its function is as follows. A translational regulator that binds mRNA to regulate translation initiation and/or mRNA stability. Usually binds in the 5'-UTR at or near the Shine-Dalgarno sequence preventing ribosome-binding, thus repressing translation. Its main target seems to be the major flagellin gene, while its function is anatagonized by FliW. In Desulfitobacterium hafniense (strain Y51), this protein is Translational regulator CsrA.